The chain runs to 480 residues: Cytochrome c oxidase subunit 1 (480 aa).

Residues 22 to 42 (ISYLWLAYWFGMIGFYMSVLI) form a helical membrane-spanning segment. E45 and G50 together coordinate Ca(2+). Helical transmembrane passes span 64–84 (LLFTLHGLIMVFFNIMTGLFG), 109–129 (SLLLQPIGFVLVVSSVYLEIG), 151–171 (LIIFGLLAAGIASTLSSINFI), 194–214 (IVLTSFLLLLSLPVVTAVFLM), 240–260 (LFWFFGHPEVYIMILPGFGII), 278–298 (MILAMGSIALLGCLVWGHHMY), 309–329 (YFTTVTILIALPTGNKIFNWV), and 343–363 (LILFAVLFIVNFVIGGTTGVV). H69 lines the Fe(II)-heme a pocket. Position 246 (H246) interacts with Cu cation. A cross-link (1'-histidyl-3'-tyrosine (His-Tyr)) is located at residues 246 to 250 (HPEVY). Y250 lines the O2 pocket. Residues H295 and H296 each coordinate Cu cation. Residues H374 and D375 each contribute to the Mg(2+) site. Position 382 (H382) interacts with heme a3. Helical transmembrane passes span 382–402 (HFHFVLSIGAIISLICFIVYI) and 416–436 (LSLMAPIFMIAVLFTFLPMHF). H384 contributes to the Fe(II)-heme a binding site. P447 is a binding site for Ca(2+). A helical membrane pass occupies residues 458-478 (FICTLGATMMLVLKLTVLFII).

This sequence belongs to the heme-copper respiratory oxidase family. Component of the cytochrome c oxidase (complex IV, CIV), a multisubunit enzyme composed of a catalytic core of 3 subunits and several supernumerary subunits. The complex exists as a monomer or a dimer and forms supercomplexes (SCs) in the inner mitochondrial membrane with ubiquinol-cytochrome c oxidoreductase (cytochrome b-c1 complex, complex III, CIII). Requires heme as cofactor. Cu cation serves as cofactor.

It localises to the mitochondrion inner membrane. It catalyses the reaction 4 Fe(II)-[cytochrome c] + O2 + 8 H(+)(in) = 4 Fe(III)-[cytochrome c] + 2 H2O + 4 H(+)(out). It participates in energy metabolism; oxidative phosphorylation. Component of the cytochrome c oxidase, the last enzyme in the mitochondrial electron transport chain which drives oxidative phosphorylation. The respiratory chain contains 3 multisubunit complexes succinate dehydrogenase (complex II, CII), ubiquinol-cytochrome c oxidoreductase (cytochrome b-c1 complex, complex III, CIII) and cytochrome c oxidase (complex IV, CIV), that cooperate to transfer electrons derived from NADH and succinate to molecular oxygen, creating an electrochemical gradient over the inner membrane that drives transmembrane transport and the ATP synthase. Cytochrome c oxidase is the component of the respiratory chain that catalyzes the reduction of oxygen to water. Electrons originating from reduced cytochrome c in the intermembrane space (IMS) are transferred via the dinuclear copper A center (CU(A)) of subunit 2 and heme A of subunit 1 to the active site in subunit 1, a binuclear center (BNC) formed by heme A3 and copper B (CU(B)). The BNC reduces molecular oxygen to 2 water molecules using 4 electrons from cytochrome c in the IMS and 4 protons from the mitochondrial matrix. This chain is Cytochrome c oxidase subunit 1 (MT-CO1), found in Theileria annulata.